The primary structure comprises 136 residues: Small ribosomal subunit protein eS17A (136 aa).

Belongs to the eukaryotic ribosomal protein eS17 family. Component of the small ribosomal subunit (SSU). Mature yeast ribosomes consist of a small (40S) and a large (60S) subunit. The 40S small subunit contains 1 molecule of ribosomal RNA (18S rRNA) and 33 different proteins (encoded by 57 genes). The large 60S subunit contains 3 rRNA molecules (25S, 5.8S and 5S rRNA) and 46 different proteins (encoded by 81 genes).

The protein localises to the cytoplasm. Component of the ribosome, a large ribonucleoprotein complex responsible for the synthesis of proteins in the cell. The small ribosomal subunit (SSU) binds messenger RNAs (mRNAs) and translates the encoded message by selecting cognate aminoacyl-transfer RNA (tRNA) molecules. The large subunit (LSU) contains the ribosomal catalytic site termed the peptidyl transferase center (PTC), which catalyzes the formation of peptide bonds, thereby polymerizing the amino acids delivered by tRNAs into a polypeptide chain. The nascent polypeptides leave the ribosome through a tunnel in the LSU and interact with protein factors that function in enzymatic processing, targeting, and the membrane insertion of nascent chains at the exit of the ribosomal tunnel. This is Small ribosomal subunit protein eS17A from Saccharomyces cerevisiae (strain ATCC 204508 / S288c) (Baker's yeast).